Here is a 375-residue protein sequence, read N- to C-terminus: Protein RecA (375 aa).

Residue 75–82 coordinates ATP; sequence GPESSGKT. The disordered stretch occupies residues 339–375; it reads GPYAKMKDEQTEEAAGDQMDEDKPIDLSPNFDDDDAN. Residues 348-358 show a composition bias toward acidic residues; sequence QTEEAAGDQMD.

This sequence belongs to the RecA family.

It is found in the cytoplasm. Its function is as follows. Can catalyze the hydrolysis of ATP in the presence of single-stranded DNA, the ATP-dependent uptake of single-stranded DNA by duplex DNA, and the ATP-dependent hybridization of homologous single-stranded DNAs. It interacts with LexA causing its activation and leading to its autocatalytic cleavage. The polypeptide is Protein RecA (Corynebacterium jeikeium (strain K411)).